A 195-amino-acid chain; its full sequence is GTP-dependent dephospho-CoA kinase (195 aa).

The GTP site is built by aspartate 49, valine 50, aspartate 68, glutamate 127, and aspartate 150.

This sequence belongs to the GTP-dependent DPCK family.

The catalysed reaction is 3'-dephospho-CoA + GTP = GDP + CoA + H(+). Its pathway is cofactor biosynthesis; coenzyme A biosynthesis. In terms of biological role, catalyzes the GTP-dependent phosphorylation of the 3'-hydroxyl group of dephosphocoenzyme A to form coenzyme A (CoA). In Methanosarcina mazei (strain ATCC BAA-159 / DSM 3647 / Goe1 / Go1 / JCM 11833 / OCM 88) (Methanosarcina frisia), this protein is GTP-dependent dephospho-CoA kinase.